A 364-amino-acid polypeptide reads, in one-letter code: MEPGELMEVDTSQELDENTSAKETDQPKDAQNDPEIVCGDSNEVKKESPSVEEDQSSTETMSNEFEVAAAILEQENEDSGQNAPSLGELLSRSVNNYHPEHYSSPPLMRKPDFRFPIINPEKAQGKLFVLYQLIITVPDSLKKFPPYTSETNCLFSENDVDFWIYKVNSVIEQAPSNALILPGFNPDTNVNFSETVGEFINRSKGFVKKPNLEQIKAVIGAVIDIKAAVEYSSMKANRPSKNKVRSKNSNSEQKRTGNFLSQVVENLMTKVDANILSRRVGKLFKNHNECTFCNIKFISFFEMCRHVGSIQLRMKINHLRYQDVHVGTWVRFLASATPQKQTIEDVIDGGSSKKVHSPEIIYID.

A compositionally biased stretch (acidic residues) spans 1–17 (MEPGELMEVDTSQELDE). Residues 1-61 (MEPGELMEVD…EEDQSSTETM (61 aa)) form a disordered region. Positions 19–31 (TSAKETDQPKDAQ) are enriched in basic and acidic residues.

This is an uncharacterized protein from Caenorhabditis elegans.